The sequence spans 831 residues: Zinc phosphodiesterase ELAC protein 2 (831 aa).

A mitochondrion-targeting transit peptide spans 1 to 16 (MWALRSLLRPLGLRTM). Disordered regions lie at residues 15-47 (TMSQGSARRPRPSKDPLRHLRTREKRGPGPGGP) and 179-227 (SERR…ANRK). Residues 186–212 (QQPSQSPRTSPNRLSPKQSSDSGSAEN) are compositionally biased toward polar residues. 5 positions are modified to phosphoserine: S191, S195, S200, S204, and S732. The interval 791–831 (LTQQADSPEDREPQQKRAHTDEPHSPQSKKESVANTLGARV) is disordered. A Phosphothreonine modification is found at T792. Residues S797 and S815 each carry the phosphoserine modification. Residues 798-822 (PEDREPQQKRAHTDEPHSPQSKKES) are compositionally biased toward basic and acidic residues.

It belongs to the RNase Z family. As to quaternary structure, homodimer. Interacts with PTCD1. The cofactor is Zn(2+).

Its subcellular location is the mitochondrion. The protein resides in the mitochondrion matrix. The protein localises to the mitochondrion nucleoid. It is found in the nucleus. It carries out the reaction Endonucleolytic cleavage of RNA, removing extra 3' nucleotides from tRNA precursor, generating 3' termini of tRNAs. A 3'-hydroxy group is left at the tRNA terminus and a 5'-phosphoryl group is left at the trailer molecule.. Functionally, zinc phosphodiesterase, which displays mitochondrial tRNA 3'-processing endonuclease activity. Involved in tRNA maturation, by removing a 3'-trailer from precursor tRNA. Associates with mitochondrial DNA complexes at the nucleoids to initiate RNA processing and ribosome assembly. In Mus musculus (Mouse), this protein is Zinc phosphodiesterase ELAC protein 2 (Elac2).